The primary structure comprises 410 residues: Venom metalloproteinase 2 (410 aa).

The N-terminal stretch at 1-22 (MDTFILTYSILFLALFIESIHS) is a signal peptide. Asn64, Asn112, Asn187, Asn231, Asn292, and Asn307 each carry an N-linked (GlcNAc...) asparagine glycan. The region spanning 214 to 410 (FYPKLLVLVD…NNNVSKFIWS (197 aa)) is the Peptidase M12B domain. His365 provides a ligand contact to Zn(2+). The active site involves Glu366. Zn(2+)-binding residues include His369 and His375. Asn403 carries an N-linked (GlcNAc...) asparagine glycan.

In the C-terminal section; belongs to the venom metalloproteinase (M12B) family. As to quaternary structure, monomer. The cofactor is Zn(2+). Expressed by the venom gland.

It is found in the secreted. With respect to regulation, the gelatinase activity is inhibited by EDTA. Functionally, the recombinant protein has gelatinase activity. In vivo, injection of this recombinant into fifth instar L.oleracea (host) larvae results in partial insect mortality associated with the molt to sixth instar, with surviving insects showing retarded development and growth. The protein is Venom metalloproteinase 2 of Eulophus pennicornis (Parasitoid wasp).